The primary structure comprises 369 residues: Tetraacyldisaccharide 4'-kinase (369 aa).

Residue 68–75 (VVGGTGKT) participates in ATP binding.

This sequence belongs to the LpxK family.

The catalysed reaction is a lipid A disaccharide + ATP = a lipid IVA + ADP + H(+). It participates in glycolipid biosynthesis; lipid IV(A) biosynthesis; lipid IV(A) from (3R)-3-hydroxytetradecanoyl-[acyl-carrier-protein] and UDP-N-acetyl-alpha-D-glucosamine: step 6/6. Its function is as follows. Transfers the gamma-phosphate of ATP to the 4'-position of a tetraacyldisaccharide 1-phosphate intermediate (termed DS-1-P) to form tetraacyldisaccharide 1,4'-bis-phosphate (lipid IVA). In Chlamydia muridarum (strain MoPn / Nigg), this protein is Tetraacyldisaccharide 4'-kinase.